A 326-amino-acid chain; its full sequence is Phospho-N-acetylmuramoyl-pentapeptide-transferase (326 aa).

The next 10 helical transmembrane spans lie at 5 to 25, 51 to 71, 82 to 102, 122 to 142, 148 to 168, 180 to 200, 204 to 224, 229 to 249, 252 to 272, and 304 to 324; these read GLLI…PIFI, TPTM…LIMA, VWLL…DDFI, IIIA…TVIY, LQFD…VGAS, LLAG…WYGI, VVAV…VFNA, VFMG…ISIL, LEIL…SVII, and VVTT…YIEV.

The protein belongs to the glycosyltransferase 4 family. MraY subfamily. Mg(2+) is required as a cofactor.

The protein resides in the cell membrane. The catalysed reaction is UDP-N-acetyl-alpha-D-muramoyl-L-alanyl-gamma-D-glutamyl-meso-2,6-diaminopimeloyl-D-alanyl-D-alanine + di-trans,octa-cis-undecaprenyl phosphate = di-trans,octa-cis-undecaprenyl diphospho-N-acetyl-alpha-D-muramoyl-L-alanyl-D-glutamyl-meso-2,6-diaminopimeloyl-D-alanyl-D-alanine + UMP. Its pathway is cell wall biogenesis; peptidoglycan biosynthesis. Its function is as follows. Catalyzes the initial step of the lipid cycle reactions in the biosynthesis of the cell wall peptidoglycan: transfers peptidoglycan precursor phospho-MurNAc-pentapeptide from UDP-MurNAc-pentapeptide onto the lipid carrier undecaprenyl phosphate, yielding undecaprenyl-pyrophosphoryl-MurNAc-pentapeptide, known as lipid I. In Oceanobacillus iheyensis (strain DSM 14371 / CIP 107618 / JCM 11309 / KCTC 3954 / HTE831), this protein is Phospho-N-acetylmuramoyl-pentapeptide-transferase.